The sequence spans 63 residues: MLILTRKVGESVLIGDDISITVLSVRGNQVKLGVEAPKEVSVHREEIYQRIKQTKDEPYLGSS.

Belongs to the CsrA/RsmA family. As to quaternary structure, homodimer; the beta-strands of each monomer intercalate to form a hydrophobic core, while the alpha-helices form wings that extend away from the core.

The protein resides in the cytoplasm. A key translational regulator that binds mRNA to regulate translation initiation and/or mRNA stability. Mediates global changes in gene expression, shifting from rapid growth to stress survival by linking envelope stress, the stringent response and the catabolite repression systems. Usually binds in the 5'-UTR; binding at or near the Shine-Dalgarno sequence prevents ribosome-binding, repressing translation, binding elsewhere in the 5'-UTR can activate translation and/or stabilize the mRNA. Its function is antagonized by small RNA(s). The sequence is that of Translational regulator CsrA from Haemophilus influenzae (strain 86-028NP).